A 181-amino-acid polypeptide reads, in one-letter code: TATA-box-binding protein (181 aa).

A run of 2 repeats spans residues 7-83 (VVNV…VKEL) and 98-173 (VQNM…SKTL).

This sequence belongs to the TBP family.

Functionally, general factor that plays a role in the activation of archaeal genes transcribed by RNA polymerase. Binds specifically to the TATA box promoter element which lies close to the position of transcription initiation. This chain is TATA-box-binding protein, found in Methanococcus maripaludis (strain DSM 14266 / JCM 13030 / NBRC 101832 / S2 / LL).